A 370-amino-acid polypeptide reads, in one-letter code: Histidinol-phosphate aminotransferase (370 aa).

Lysine 223 is subject to N6-(pyridoxal phosphate)lysine.

This sequence belongs to the class-II pyridoxal-phosphate-dependent aminotransferase family. Histidinol-phosphate aminotransferase subfamily. As to quaternary structure, homodimer. Pyridoxal 5'-phosphate serves as cofactor.

It catalyses the reaction L-histidinol phosphate + 2-oxoglutarate = 3-(imidazol-4-yl)-2-oxopropyl phosphate + L-glutamate. Its pathway is amino-acid biosynthesis; L-histidine biosynthesis; L-histidine from 5-phospho-alpha-D-ribose 1-diphosphate: step 7/9. This chain is Histidinol-phosphate aminotransferase, found in Methylobacterium nodulans (strain LMG 21967 / CNCM I-2342 / ORS 2060).